A 151-amino-acid chain; its full sequence is Transcriptional repressor NrdR (151 aa).

A zinc finger lies at 3-34 (CPFCSSDNTRVIDSRPADDNSSIRRRRLCDDC). Residues 49-139 (LIVIKKDNNR…VYREFKDVNT (91 aa)) form the ATP-cone domain.

It belongs to the NrdR family. Zn(2+) serves as cofactor.

Its function is as follows. Negatively regulates transcription of bacterial ribonucleotide reductase nrd genes and operons by binding to NrdR-boxes. The chain is Transcriptional repressor NrdR from Agathobacter rectalis (strain ATCC 33656 / DSM 3377 / JCM 17463 / KCTC 5835 / VPI 0990) (Eubacterium rectale).